A 185-amino-acid chain; its full sequence is Inner membrane-spanning protein YciB (185 aa).

5 helical membrane-spanning segments follow: residues 19–39 (IHGI…LMAW), 49–69 (TMTW…LYFH), 72–92 (TFIK…LLFT), 122–142 (GYWI…AYAF), and 150–170 (FKLF…AVVI).

This sequence belongs to the YciB family.

The protein localises to the cell inner membrane. Functionally, plays a role in cell envelope biogenesis, maintenance of cell envelope integrity and membrane homeostasis. The polypeptide is Inner membrane-spanning protein YciB (Acidithiobacillus ferrooxidans (strain ATCC 23270 / DSM 14882 / CIP 104768 / NCIMB 8455) (Ferrobacillus ferrooxidans (strain ATCC 23270))).